Consider the following 341-residue polypeptide: L-threonine 3-dehydrogenase (341 aa).

Cysteine 38 contacts Zn(2+). Catalysis depends on charge relay system residues threonine 40 and histidine 43. Residues histidine 63, glutamate 64, cysteine 93, cysteine 96, cysteine 99, and cysteine 107 each coordinate Zn(2+). NAD(+)-binding positions include isoleucine 175, aspartate 195, arginine 200, 262–264 (LGI), and 286–287 (IY).

It belongs to the zinc-containing alcohol dehydrogenase family. In terms of assembly, homotetramer. The cofactor is Zn(2+).

It is found in the cytoplasm. It catalyses the reaction L-threonine + NAD(+) = (2S)-2-amino-3-oxobutanoate + NADH + H(+). The protein operates within amino-acid degradation; L-threonine degradation via oxydo-reductase pathway; glycine from L-threonine: step 1/2. In terms of biological role, catalyzes the NAD(+)-dependent oxidation of L-threonine to 2-amino-3-ketobutyrate. The polypeptide is L-threonine 3-dehydrogenase (Yersinia pseudotuberculosis serotype O:1b (strain IP 31758)).